The sequence spans 47 residues: Capistruin (47 aa).

Residues 1-28 (MVRLLAKLLRSTIHGSNGVSLDAVSSTH) constitute a propeptide that is removed on maturation. A cross-link (isoaspartyl glycine isopeptide (Gly-Asp)) is located at residues 29-37 (GTPGFQTPD).

Post-translationally, it is assumed that the two processing enzymes CapB/CapC convert the precursor protein CapA into the mature lasso peptide capistruin. CapB is assumed to cleave the precursor protein CapA and to set an N-terminal Gly free, whose a-NH2 group acts as the nucleophile in the subsequent cyclization reaction. CapC is most likely involved in the side-chain carboxyl group activation of aspartic acid at position 9 generating the electrophile for the condensation reaction. CapD may export capistruin outside of the producing cells.

The protein resides in the secreted. Functionally, peptide antibiotic that functions through inhibition of the bacterial DNA-dependent RNA polymerase (RNAP). Inhibits transcription by binding in RNAP secondary channel, where it sterically blocks the folding of the trigger loop, which is essential for efficient catalysis. In contrast to MccJ25, does not restrict access of nucleotide substrates to the catalytic center and shows a non-competitive mode of inhibition. Shows activity against closely related Gram-negative Burkholderia and Pseudomonas strains. Is not active against Gram-positive bacteria. In Burkholderia thailandensis (strain ATCC 700388 / DSM 13276 / CCUG 48851 / CIP 106301 / E264), this protein is Capistruin.